Consider the following 321-residue polypeptide: MSKPIQMERGVKYRDADKMALIPVKSVAVEREQLLRKPEWMKIKLPADSSRIQGIKAAMRKNGLHSVCEEASCPNLAECFNHGTATFMILGAICTRRCPFCDVAHGRPLAPDTNEPEKLAQTIADMGLRYVVITSVDRDDLRDGGAQHFADCIHAIRAKSPQIRIETLVPDFRGRMDRALEILHDNPPDVFNHNLENIPRLYRQVRPGANYEWSLRLLQQFKQQHPQIPTKSGLMVGLGETNQEIIEVMRDLRAHGVTMLTLGQYLQPSRHHLPVQRYVSPEEFAEMKAEALAMGFTHAACGPFVRSSYHADLQAQGMEVK.

[4Fe-4S] cluster is bound by residues C68, C73, C79, C94, C98, C101, and S308. The Radical SAM core domain occupies 80–297; that stretch reads FNHGTATFMI…KAEALAMGFT (218 aa).

It belongs to the radical SAM superfamily. Lipoyl synthase family. The cofactor is [4Fe-4S] cluster.

It is found in the cytoplasm. It carries out the reaction [[Fe-S] cluster scaffold protein carrying a second [4Fe-4S](2+) cluster] + N(6)-octanoyl-L-lysyl-[protein] + 2 oxidized [2Fe-2S]-[ferredoxin] + 2 S-adenosyl-L-methionine + 4 H(+) = [[Fe-S] cluster scaffold protein] + N(6)-[(R)-dihydrolipoyl]-L-lysyl-[protein] + 4 Fe(3+) + 2 hydrogen sulfide + 2 5'-deoxyadenosine + 2 L-methionine + 2 reduced [2Fe-2S]-[ferredoxin]. It participates in protein modification; protein lipoylation via endogenous pathway; protein N(6)-(lipoyl)lysine from octanoyl-[acyl-carrier-protein]: step 2/2. Functionally, catalyzes the radical-mediated insertion of two sulfur atoms into the C-6 and C-8 positions of the octanoyl moiety bound to the lipoyl domains of lipoate-dependent enzymes, thereby converting the octanoylated domains into lipoylated derivatives. The protein is Lipoyl synthase of Edwardsiella ictaluri (strain 93-146).